The chain runs to 513 residues: ATP synthase subunit alpha (513 aa).

Residue 169–176 (GDRQTGKT) participates in ATP binding.

The protein belongs to the ATPase alpha/beta chains family. In terms of assembly, F-type ATPases have 2 components, CF(1) - the catalytic core - and CF(0) - the membrane proton channel. CF(1) has five subunits: alpha(3), beta(3), gamma(1), delta(1), epsilon(1). CF(0) has three main subunits: a(1), b(2) and c(9-12). The alpha and beta chains form an alternating ring which encloses part of the gamma chain. CF(1) is attached to CF(0) by a central stalk formed by the gamma and epsilon chains, while a peripheral stalk is formed by the delta and b chains.

Its subcellular location is the cell inner membrane. It carries out the reaction ATP + H2O + 4 H(+)(in) = ADP + phosphate + 5 H(+)(out). Functionally, produces ATP from ADP in the presence of a proton gradient across the membrane. The alpha chain is a regulatory subunit. This is ATP synthase subunit alpha from Haemophilus influenzae (strain ATCC 51907 / DSM 11121 / KW20 / Rd).